Here is a 516-residue protein sequence, read N- to C-terminus: Protein indeterminate-domain 4, chloroplastic (516 aa).

Residues 1–26 (MSSSSYNTSVIPSSSSSAQPFFITSS) show a composition bias toward low complexity. Residues 1 to 68 (MSSSSYNTSV…QPGNPNPDAE (68 aa)) are disordered. The N-terminal 70 residues, 1-70 (MSSSSYNTSV…GNPNPDAEVV (70 aa)), are a transit peptide targeting the chloroplast. A Phosphoserine modification is found at S73. 2 C2H2-type zinc fingers span residues 83–105 (FICD…RRGH) and 124–154 (YLCP…YRKH). Positions 146–153 (IKKHYYRK) match the Nuclear localization signal motif. A C2H2-type 2; degenerate zinc finger spans residues 159–182 (WKCEKCSKRYAVQSDWKAHSKTCG). Zn(2+) contacts are provided by C161, C164, H177, C181, C188, C190, H203, and C207. The CCHC-type 2; atypical zinc finger occupies 186 to 209 (YRCDCGTIFSRRDSYITHRAFCDA). The tract at residues 196–208 (RRDSYITHRAFCD) is SHR-binding. A disordered region spans residues 483–516 (NRGGGGGGRGSARGGVSLDGEAKFPEQNYPFGRG). A compositionally biased stretch (gly residues) spans 484 to 495 (RGGGGGGRGSAR).

Binds to RGA and SCL3 competitively in the nucleus.

Its subcellular location is the plastid. It is found in the chloroplast. The protein resides in the nucleus. Transcription factor that may act a transcriptional activator of nuclear-encoded photosynthetic gene expression. Binds DNA via its zinc fingers. Recognizes and binds to SCL3 promoter sequence 5'-AGACAA-3' to promote its expression when in complex with RGA. This is Protein indeterminate-domain 4, chloroplastic from Arabidopsis thaliana (Mouse-ear cress).